The primary structure comprises 276 residues: Hydroxycinnamoyl-CoA hydratase-lyase (276 aa).

Residues Lys-29, Ala-68, Met-70, and Leu-72 each contribute to the acetyl-CoA site. Vanillin is bound at residue Tyr-75. Acetyl-CoA-binding residues include Gly-120, Ser-142, and Trp-146. Vanillin is bound by residues Gly-151 and Tyr-239.

The protein belongs to the enoyl-CoA hydratase/isomerase family. Homohexamer; dimer of trimers.

It catalyses the reaction (E)-feruloyl-CoA + H2O = vanillin + acetyl-CoA. The enzyme catalyses (E)-caffeoyl-CoA + H2O = 3,4-dihydroxybenzaldehyde + acetyl-CoA. The catalysed reaction is (E)-4-coumaroyl-CoA + H2O = 4-hydroxybenzaldehyde + acetyl-CoA. It carries out the reaction (E)-feruloyl-CoA + H2O = 3-hydroxy-3-(4-hydroxy-3-methoxyphenyl)propanoyl-CoA. It catalyses the reaction 3-hydroxy-3-(4-hydroxy-3-methoxyphenyl)propanoyl-CoA = vanillin + acetyl-CoA. The enzyme catalyses (E)-caffeoyl-CoA + H2O = 3-hydroxy-3-(3,4-dihydroxyphenyl)propanoyl-CoA. The catalysed reaction is 3-hydroxy-3-(3,4-dihydroxyphenyl)propanoyl-CoA = 3,4-dihydroxybenzaldehyde + acetyl-CoA. It carries out the reaction (E)-4-coumaroyl-CoA + H2O = 3-hydroxy-3-(4-hydroxyphenyl)propanoyl-CoA. It catalyses the reaction 3-hydroxy-3-(4-hydroxyphenyl)propanoyl-CoA = 4-hydroxybenzaldehyde + acetyl-CoA. Its function is as follows. Catalyzes the hydration of the acyl-CoA thioester of ferulic acid and the subsequent retro-aldol cleavage of the hydrated intermediate to yield vanillin (4-hydroxy-3-methoxy-benzaldehyde). The enzyme is also active with caffeoyl-CoA and 4-coumaroyl-CoA producing 3,4-dihydroxybenzaldehyde and 4-hydroxybenzaldehyde, respectively. This is Hydroxycinnamoyl-CoA hydratase-lyase from Pseudomonas fluorescens.